A 212-amino-acid chain; its full sequence is uncharacterized protein (212 aa).

Residues 105 to 187 (NTIYLVEGDF…QVKVVQLKGK (83 aa)) enclose the Toprim domain.

This is an uncharacterized protein from Mycoplasma pneumoniae (strain ATCC 29342 / M129 / Subtype 1) (Mycoplasmoides pneumoniae).